The sequence spans 113 residues: Large ribosomal subunit protein uL24 (113 aa).

The protein belongs to the universal ribosomal protein uL24 family. As to quaternary structure, part of the 50S ribosomal subunit.

One of two assembly initiator proteins, it binds directly to the 5'-end of the 23S rRNA, where it nucleates assembly of the 50S subunit. Its function is as follows. One of the proteins that surrounds the polypeptide exit tunnel on the outside of the subunit. The sequence is that of Large ribosomal subunit protein uL24 from Micrococcus luteus (Micrococcus lysodeikticus).